The following is a 232-amino-acid chain: 5'-methylthioadenosine/S-adenosylhomocysteine nucleosidase (232 aa).

The active-site Proton acceptor is Glu12. Substrate contacts are provided by residues Gly78, Val152, and 173 to 174 (ME). Residue Asp197 is the Proton donor of the active site.

It belongs to the PNP/UDP phosphorylase family. MtnN subfamily. In terms of assembly, homodimer.

The enzyme catalyses S-adenosyl-L-homocysteine + H2O = S-(5-deoxy-D-ribos-5-yl)-L-homocysteine + adenine. The catalysed reaction is S-methyl-5'-thioadenosine + H2O = 5-(methylsulfanyl)-D-ribose + adenine. It carries out the reaction 5'-deoxyadenosine + H2O = 5-deoxy-D-ribose + adenine. It participates in amino-acid biosynthesis; L-methionine biosynthesis via salvage pathway; S-methyl-5-thio-alpha-D-ribose 1-phosphate from S-methyl-5'-thioadenosine (hydrolase route): step 1/2. Catalyzes the irreversible cleavage of the glycosidic bond in both 5'-methylthioadenosine (MTA) and S-adenosylhomocysteine (SAH/AdoHcy) to adenine and the corresponding thioribose, 5'-methylthioribose and S-ribosylhomocysteine, respectively. Also cleaves 5'-deoxyadenosine, a toxic by-product of radical S-adenosylmethionine (SAM) enzymes, into 5-deoxyribose and adenine. Thus, is required for in vivo function of the radical SAM enzymes biotin synthase and lipoic acid synthase, that are inhibited by 5'-deoxyadenosine accumulation. The sequence is that of 5'-methylthioadenosine/S-adenosylhomocysteine nucleosidase from Buchnera aphidicola subsp. Acyrthosiphon pisum (strain APS) (Acyrthosiphon pisum symbiotic bacterium).